The following is a 367-amino-acid chain: Phosphoribosylaminoimidazole-succinocarboxamide synthase (367 aa).

Belongs to the SAICAR synthetase family.

It carries out the reaction 5-amino-1-(5-phospho-D-ribosyl)imidazole-4-carboxylate + L-aspartate + ATP = (2S)-2-[5-amino-1-(5-phospho-beta-D-ribosyl)imidazole-4-carboxamido]succinate + ADP + phosphate + 2 H(+). The protein operates within purine metabolism; IMP biosynthesis via de novo pathway; 5-amino-1-(5-phospho-D-ribosyl)imidazole-4-carboxamide from 5-amino-1-(5-phospho-D-ribosyl)imidazole-4-carboxylate: step 1/2. This chain is Phosphoribosylaminoimidazole-succinocarboxamide synthase, found in Aliivibrio fischeri (strain ATCC 700601 / ES114) (Vibrio fischeri).